Here is an 83-residue protein sequence, read N- to C-terminus: Short neurotoxin 1 (83 aa).

The first 21 residues, 1–21 (MKTLLLTLVVVTIVCLDLGYT), serve as a signal peptide directing secretion. Cystine bridges form between cysteine 24–cysteine 45, cysteine 38–cysteine 62, cysteine 64–cysteine 75, and cysteine 76–cysteine 81.

It belongs to the three-finger toxin family. Short-chain subfamily. Type I alpha-neurotoxin sub-subfamily. As to expression, expressed by the venom gland.

The protein resides in the secreted. Its function is as follows. Binds to muscle nicotinic acetylcholine receptor (nAChR) and inhibit acetylcholine from binding to the receptor, thereby impairing neuromuscular transmission. This chain is Short neurotoxin 1, found in Pseudechis australis (Mulga snake).